We begin with the raw amino-acid sequence, 82 residues long: Small ribosomal subunit protein bS16 (82 aa).

Belongs to the bacterial ribosomal protein bS16 family.

This is Small ribosomal subunit protein bS16 from Pseudoalteromonas translucida (strain TAC 125).